A 577-amino-acid chain; its full sequence is PTS system lactose-specific EIICB component (577 aa).

The PTS EIIC type-3 domain occupies 4-405 (VFDKLKPVFE…VLDVAIYFPF (402 aa)). 9 consecutive transmembrane segments (helical) span residues 27-47 (GFIA…VAYV), 63-83 (LMVA…GTTA), 100-120 (INPV…SILP), 133-153 (QGLI…YVCI), 176-196 (LIPM…FKAA), 219-239 (YLGL…GVQG), 280-300 (VMNF…LFAA), 326-346 (FGMP…TPIV), and 386-406 (LAFV…FPFI). In terms of domain architecture, PTS EIIB type-3 spans 476–577 (EVDVLVLCAG…MALDFVESNL (102 aa)). Cysteine 483 (phosphocysteine intermediate; for EIIB activity) is an active-site residue. A Phosphocysteine; by EIIA modification is found at cysteine 483.

It is found in the cell membrane. The enzyme catalyses lactose(out) + N(pros)-phospho-L-histidyl-[protein] = lactose 6-phosphate(in) + L-histidyl-[protein]. Its function is as follows. The phosphoenolpyruvate-dependent sugar phosphotransferase system (sugar PTS), a major carbohydrate active transport system, catalyzes the phosphorylation of incoming sugar substrates concomitantly with their translocation across the cell membrane. The enzyme II LacEF PTS system is involved in lactose transport. This Lacticaseibacillus casei (Lactobacillus casei) protein is PTS system lactose-specific EIICB component.